The chain runs to 146 residues: uncharacterized protein (146 aa).

2 consecutive transmembrane segments (helical) span residues 89–111 (AIEMVGKVLILVPLLASLVLLLY) and 121–143 (IGCGFCLGTVILAGIVLVGYSVV).

It localises to the cell membrane. This is an uncharacterized protein from Archaeoglobus fulgidus (strain ATCC 49558 / DSM 4304 / JCM 9628 / NBRC 100126 / VC-16).